A 248-amino-acid polypeptide reads, in one-letter code: MRSSGRKKEQIRPVKITRNFTKYAEGSVLIEVGDTKVLCTASIEEKVPPFLKGSGEGWITAEYNMIPRSTQSRKQRDINKLKIDGRTMEIQRLIGRALRSAVDMKALGEKTIWIDCDVLQADGGTRTTSITGSFVALVDAVNKLHQKKPFNVYPIRHFVSAVSIGIVGEEKVLDLCYEEDHVAKVDMNVVMIEEGEFIEIQGTGEIGPFSRKELDELLNLAEKGAKQMIQAQKNALKTDSLWIGTGRE.

Residues arginine 86 and 124–126 each bind phosphate; that span reads GTR.

This sequence belongs to the RNase PH family. In terms of assembly, homohexameric ring arranged as a trimer of dimers.

The enzyme catalyses tRNA(n+1) + phosphate = tRNA(n) + a ribonucleoside 5'-diphosphate. Functionally, phosphorolytic 3'-5' exoribonuclease that plays an important role in tRNA 3'-end maturation. Removes nucleotide residues following the 3'-CCA terminus of tRNAs; can also add nucleotides to the ends of RNA molecules by using nucleoside diphosphates as substrates, but this may not be physiologically important. Probably plays a role in initiation of 16S rRNA degradation (leading to ribosome degradation) during starvation. This chain is Ribonuclease PH, found in Clostridium perfringens (strain SM101 / Type A).